Reading from the N-terminus, the 459-residue chain is Cysteine--tRNA ligase (459 aa).

Residue Cys29 coordinates Zn(2+). Residues 31 to 41 carry the 'HIGH' region motif; it reads PTVYDRAHIGN. The Zn(2+) site is built by Cys209, His234, and Glu238. A 'KMSKS' region motif is present at residues 267 to 271; that stretch reads KMSKS. Residue Lys270 coordinates ATP.

Belongs to the class-I aminoacyl-tRNA synthetase family. In terms of assembly, monomer. Requires Zn(2+) as cofactor.

The protein resides in the cytoplasm. It catalyses the reaction tRNA(Cys) + L-cysteine + ATP = L-cysteinyl-tRNA(Cys) + AMP + diphosphate. This Rhodospirillum rubrum (strain ATCC 11170 / ATH 1.1.1 / DSM 467 / LMG 4362 / NCIMB 8255 / S1) protein is Cysteine--tRNA ligase.